The following is a 359-amino-acid chain: Structure-specific endonuclease subunit SLX1 homolog (359 aa).

A GIY-YIG domain is found at 9–91 (GLFACYCLVA…TYPTRSRYVN (83 aa)). The segment at 192 to 238 (CPICQDGVSPSNVQCMQCSARFCITCAGKLFTRRNTLIPCFGKCPIC) adopts an SLX1-type zinc-finger fold. The tract at residues 256–359 (VAGRKSVPHK…LPSDVISITD (104 aa)) is disordered. Residues 269–281 (VDGQSSLSQNSSY) are compositionally biased toward polar residues. Residues 295 to 306 (EPEKDDISRDES) show a composition bias toward basic and acidic residues. Positions 316–326 (SSVALSDSSRS) are enriched in low complexity.

It belongs to the SLX1 family. As to quaternary structure, forms a heterodimer with a member of the SLX4 family. Requires a divalent metal cation as cofactor.

It localises to the nucleus. In terms of biological role, catalytic subunit of a heterodimeric structure-specific endonuclease that resolves DNA secondary structures generated during DNA repair and recombination. Has endonuclease activity towards branched DNA substrates, introducing single-strand cuts in duplex DNA close to junctions with ss-DNA. The sequence is that of Structure-specific endonuclease subunit SLX1 homolog from Giardia intestinalis (strain ATCC 50803 / WB clone C6) (Giardia lamblia).